The following is a 338-amino-acid chain: Ketol-acid reductoisomerase (NADP(+)) (338 aa).

Residues 1–181 enclose the KARI N-terminal Rossmann domain; sequence MKVFYDKDAD…GGGKAGIIET (181 aa). NADP(+) contacts are provided by residues 24 to 27, arginine 47, and serine 52; that span reads YGSQ. Histidine 107 is a catalytic residue. Position 133 (glycine 133) interacts with NADP(+). A KARI C-terminal knotted domain is found at 182 to 327; it reads NFREETETDL…EKLRAMMPWI (146 aa). Aspartate 190, glutamate 194, glutamate 226, and glutamate 230 together coordinate Mg(2+). Serine 251 contacts substrate.

It belongs to the ketol-acid reductoisomerase family. Mg(2+) is required as a cofactor.

It carries out the reaction (2R)-2,3-dihydroxy-3-methylbutanoate + NADP(+) = (2S)-2-acetolactate + NADPH + H(+). The enzyme catalyses (2R,3R)-2,3-dihydroxy-3-methylpentanoate + NADP(+) = (S)-2-ethyl-2-hydroxy-3-oxobutanoate + NADPH + H(+). The protein operates within amino-acid biosynthesis; L-isoleucine biosynthesis; L-isoleucine from 2-oxobutanoate: step 2/4. It participates in amino-acid biosynthesis; L-valine biosynthesis; L-valine from pyruvate: step 2/4. Involved in the biosynthesis of branched-chain amino acids (BCAA). Catalyzes an alkyl-migration followed by a ketol-acid reduction of (S)-2-acetolactate (S2AL) to yield (R)-2,3-dihydroxy-isovalerate. In the isomerase reaction, S2AL is rearranged via a Mg-dependent methyl migration to produce 3-hydroxy-3-methyl-2-ketobutyrate (HMKB). In the reductase reaction, this 2-ketoacid undergoes a metal-dependent reduction by NADPH to yield (R)-2,3-dihydroxy-isovalerate. The polypeptide is Ketol-acid reductoisomerase (NADP(+)) (Leptothrix cholodnii (strain ATCC 51168 / LMG 8142 / SP-6) (Leptothrix discophora (strain SP-6))).